A 605-amino-acid chain; its full sequence is Tyrosyl-DNA phosphodiesterase 1 (605 aa).

A Nuclear localization signal motif is present at residues 81 to 86 (RKKVKP). Residue H236 is the Nucleophile of the active site. K238 serves as a coordination point for substrate. The segment at 379 to 382 (SLGS) is interaction with DNA. Residue H466 is the Proton donor/acceptor of the active site. K468 is a binding site for substrate.

It belongs to the tyrosyl-DNA phosphodiesterase family. In terms of tissue distribution, ubiquitous, with a low level in roots.

Its subcellular location is the nucleus. With respect to regulation, inhibited by vanadate analogs. DNA repair enzyme that can remove a variety of covalent adducts from DNA through hydrolysis of a 3'-phosphodiester bond, giving rise to DNA with a free 3' phosphate. Catalyzes the hydrolysis of dead-end complexes between DNA and the topoisomerase I active site tyrosine residue. This Arabidopsis thaliana (Mouse-ear cress) protein is Tyrosyl-DNA phosphodiesterase 1.